Consider the following 228-residue polypeptide: Aspartate racemase (228 aa).

Substrate is bound at residue Asp47 to Thr49. The active-site Proton donor/acceptor is Cys82. Substrate is bound by residues Asn83–Ala85 and Lys164. Catalysis depends on Cys194, which acts as the Proton donor/acceptor.

This sequence belongs to the aspartate/glutamate racemases family. Homodimer. The existence of the interchain disulfide bond seen in the crystal structures is uncertain, but disulfide bonds have been reported for cytoplasmic proteins from thermophiles.

It carries out the reaction L-aspartate = D-aspartate. With respect to regulation, weakly inhibited by citrate, but not by asparagine. This chain is Aspartate racemase, found in Pyrococcus horikoshii (strain ATCC 700860 / DSM 12428 / JCM 9974 / NBRC 100139 / OT-3).